We begin with the raw amino-acid sequence, 150 residues long: UPF0178 protein Sbal195_1808 (150 aa).

This sequence belongs to the UPF0178 family.

The polypeptide is UPF0178 protein Sbal195_1808 (Shewanella baltica (strain OS195)).